The following is a 66-amino-acid chain: Defensin-like peptide 2/4 (66 aa).

The first 22 residues, 1–22, serve as a signal peptide directing secretion; sequence MRLAYLLLLLVAVLFQAGGGSA. A propeptide spanning residues 23–24 is cleaved from the precursor; it reads KP. Met26 carries the post-translational modification D-methionine; in form DLP-2. 3 disulfides stabilise this stretch: Cys33–Cys63, Cys40–Cys56, and Cys48–Cys64.

Post-translationally, stereoinversion of L-Met-26 (in DLP-4) to D-Met-26 (in DLP-2). Produced by the crural gland and detected in venom from the spur located on each male hind leg. Is also widely expressed in both male and female tissues, including brain, intestine, kidney, lung, spleen and testis.

Its subcellular location is the secreted. Functionally, does not show antimicrobial, myotoxic, hemolytic and cell-promoting activities. The protein is Defensin-like peptide 2/4 of Ornithorhynchus anatinus (Duckbill platypus).